A 953-amino-acid chain; its full sequence is Mannosylglycoprotein endo-beta-mannosidase (953 aa).

E461 (proton donor) is an active-site residue. The active-site Nucleophile is the E553.

This sequence belongs to the glycosyl hydrolase 2 family. As to quaternary structure, heterotrimer of 31 kDa, 28 kDa and 42 kDa subunits. The mature enzyme is proteotically cleaved into 3 subunits of 31 kDa, 28 kDa and 42 kDa. In terms of tissue distribution, ubiquitously expressed.

The catalysed reaction is Hydrolysis of the alpha-D-mannosyl-(1-&gt;6)-beta-D-mannosyl-(1-&gt;4)-N-acetyl-beta-D-glucosaminyl-(1-&gt;4)-N-acetyl-beta-D-glucosaminyl sequence of glycoprotein to alpha-D-mannosyl-(1-&gt;6)-D-mannose and N-acetyl-beta-D-glucosaminyl-(1-&gt;4)-N-acetyl-beta-D-glucosaminyl sequences.. Functionally, glycosidase that specifically hydrolyzes the Man-beta-1,4-GlcNAc linkage in the trimannosyl core structure of N-glycans. Does not hydrolyzes pyridylamino derivatives sugar chains containing Man-alpha-1,3-Man-beta or Xylose-beta-1,2-Man-beta. The protein is Mannosylglycoprotein endo-beta-mannosidase (EBM) of Lilium longiflorum (Trumpet lily).